Reading from the N-terminus, the 792-residue chain is MVTKAKIPLFLFLSALFLALVCSSLALETEDLSNELNPHHDPESHRWEFQQCQERCQHEERGQRQAQQCQRRCEEQLREREREREREEIVDPREPRKQYEQCRETCEKQDPRQQPQCERRCERQFQEQQERERRERRRGRDDDDKENPRDPREQYRQCEEHCRRQGQGQRQQQQCQSRCEERFEEEQRRQEERERRRGRDNDDEENPRDPREQYRQCQEHCRRQGQGQRQQQQCQSRCEERLEEEQRKQEERERRRGRDEDDQNPRDPEQRYEQCQQQCERQRRGQEQQLCRRRCEQQRQQEERERQRGRDRQDPQQQYHRCQRRCQTQEQSPERQRQCQQRCERQYKEQQGREWGPDQASPRRESRGREEEQQRHNPYYFHSQGLRSRHESGEGEVKYLERFTERTELLRGIENYRVVILEANPNTFVLPYHKDAESVIVVTRGRATLTFVSQERRESFNLEYGDVIRVPAGATEYVINQDSNERLEMVKLLQPVNNPGQFREYYAAGAQSTESYLRVFSNDILVAALNTPRDRLERFFDQQEQREGVIIRASQEKLRALSQHAMSAGQRPWGRRSSGGPISLKSQRSSYSNQFGQFFEACPEEHRQLQEMDVLVNYAEIKRGAMMVPHYNSKATVVVYVVEGTGRFEMACPHDVSSQSYEYKGRREQEEEESSTGQFQKVTARLARGDIFVIPAGHPIAITASQNENLRLVGFGINGKNNQRNFLAGQNNIINQLEREAKELSFNMPREEIEEIFERQVESYFVPMERQSRRGQGRDHPLASILDFAGFF.

Residues 1 to 26 (MVTKAKIPLFLFLSALFLALVCSSLA) form the signal peptide. Disordered regions lie at residues 132–153 (ERRE…DPRE), 182–217 (RFEE…YRQC), 240–272 (ERLE…EQRY), 302–325 (EERE…CQRR), and 350–394 (QQGR…ESGE). Basic and acidic residues-rich tracts occupy residues 182–200 (RFEE…RGRD) and 207–217 (PRDPREQYRQC). Over residues 302–314 (EERERQRGRDRQD) the composition is skewed to basic and acidic residues. Residues 315–325 (PQQQYHRCQRR) show a composition bias toward low complexity. The span at 350-375 (QQGREWGPDQASPRRESRGREEEQQR) shows a compositional bias: basic and acidic residues. Tyrosine 379 contacts Cu cation. 2 consecutive Cupin type-1 domains span residues 384–537 (QGLR…DRLE) and 582–754 (ISLK…EEIE). Cu cation-binding residues include cysteine 652, histidine 654, and histidine 698. Positions 727 to 754 (LAGQNNIINQLEREAKELSFNMPREEIE) form a coiled coil.

This sequence belongs to the 7S seed storage protein family. In terms of assembly, homotrimer. As to expression, expressed in seed (at protein level). Expressed in seed.

Functionally, seed storage protein. This Carya illinoinensis (Pecan) protein is Vicilin Car i 2.0101.